Reading from the N-terminus, the 287-residue chain is Fructose-1,6-bisphosphatase class 1 (287 aa).

Residues Glu67, Asp87, Leu89, and Asp90 each coordinate Mg(2+). Substrate contacts are provided by residues 90–93 (DGSS), Tyr195, and Lys225. Residue Glu231 coordinates Mg(2+).

Belongs to the FBPase class 1 family. Homotetramer. Mg(2+) is required as a cofactor.

It localises to the cytoplasm. The catalysed reaction is beta-D-fructose 1,6-bisphosphate + H2O = beta-D-fructose 6-phosphate + phosphate. The protein operates within carbohydrate biosynthesis; gluconeogenesis. This Halobacterium salinarum (strain ATCC 29341 / DSM 671 / R1) protein is Fructose-1,6-bisphosphatase class 1.